The chain runs to 242 residues: Ribose-5-phosphate isomerase A (242 aa).

Residues 39 to 42, 95 to 98, and 108 to 111 each bind substrate; these read SGST, DGAD, and KGGG. The Proton acceptor role is filled by glutamate 117. A substrate-binding site is contributed by lysine 135.

Belongs to the ribose 5-phosphate isomerase family. As to quaternary structure, homodimer.

It carries out the reaction aldehydo-D-ribose 5-phosphate = D-ribulose 5-phosphate. It participates in carbohydrate degradation; pentose phosphate pathway; D-ribose 5-phosphate from D-ribulose 5-phosphate (non-oxidative stage): step 1/1. In terms of biological role, catalyzes the reversible conversion of ribose-5-phosphate to ribulose 5-phosphate. The sequence is that of Ribose-5-phosphate isomerase A from Chlamydia trachomatis serovar A (strain ATCC VR-571B / DSM 19440 / HAR-13).